Consider the following 1041-residue polypeptide: Leucine-rich repeat receptor-like protein kinase TDR (1041 aa).

The signal sequence occupies residues 1 to 29 (MKKKNISPSLVLHPLLLLLLPFFAFNSLA). Topologically, residues 30–652 (LKFSPQLLSL…HHKEERPKKT (623 aa)) are extracellular. An intrachain disulfide couples cysteine 69 to cysteine 76. 3 N-linked (GlcNAc...) asparagine glycosylation sites follow: asparagine 78, asparagine 92, and asparagine 111. 21 LRR repeats span residues 80–104 (TAQV…IRYL), 105–128 (SSLL…IFDL), 130–152 (KLTT…ISKL), 154–176 (FLKV…VSRL), 177–199 (RFLE…AYGG), 200–224 (LQRL…LGLL), 225–248 (TELQ…FALL), 250–272 (NLKY…LGNL), 273–296 (SNLE…YSNL), 297–319 (KSLK…GFST), 321–344 (KNLT…IGEL), 345–368 (PELT…LGSN), 369–392 (GKLE…LCHG), 394–416 (KLYK…LTRC), 418–439 (SLWR…GFGS), 440–464 (LRNL…FATA), 466–488 (VLQY…IWKA), 511–535 (CKSF…IGHC), 536–558 (EKLL…EIST), 559–583 (LPSI…FGSS), and 585–607 (TITT…SFAH). The CLE peptide binding stretch occupies residues 186 to 188 (GSY). Positions 233–235 (GYN) are CLE peptide binding. Residues asparagine 258 and asparagine 271 are each glycosylated (N-linked (GlcNAc...) asparagine). The segment at 303-307 (DFSSN) is CLE peptide binding. N-linked (GlcNAc...) asparagine glycosylation is found at asparagine 322, asparagine 332, and asparagine 356. The interval 375–377 (DVS) is CLE peptide binding. Asparagine 378 is a glycosylation site (N-linked (GlcNAc...) asparagine). A disulfide bridge connects residues cysteine 390 and cysteine 416. The CLE peptide binding stretch occupies residues 421 to 423 (RFR). Asparagine 430, asparagine 442, asparagine 471, asparagine 525, and asparagine 542 each carry an N-linked (GlcNAc...) asparagine glycan. A disulfide bridge links cysteine 511 with cysteine 535. A glycan (N-linked (GlcNAc...) asparagine) is linked at asparagine 590. The cysteines at positions 620 and 628 are disulfide-linked. Residues 653–673 (AGAIVWILAAAIGVGFFVLVA) form a helical membrane-spanning segment. Topologically, residues 674 to 1041 (ATRCFQKSYG…HDVKCQRIGV (368 aa)) are cytoplasmic. Position 710 is a phosphothreonine (threonine 710). The Protein kinase domain occupies 719 to 1001 (SKTDNILGMG…DVLLILQEAK (283 aa)). Residues 725 to 733 (LGMGSTGTV) and lysine 747 each bind ATP. Residues tyrosine 798 and tyrosine 839 each carry the phosphotyrosine modification. Catalysis depends on aspartate 852, which acts as the Proton acceptor. Serine 884 is subject to Phosphoserine. Phosphotyrosine is present on residues tyrosine 892 and tyrosine 899. Threonine 900 carries the phosphothreonine modification.

The protein belongs to the protein kinase superfamily. Ser/Thr protein kinase family. Interacts specifically with the mature peptides CLE41p and CLE44p, especially in the presence of SERK2. Interacts with LURE1.2. Widely expressed along the vascular strands. In roots and hypocotyls, confined to procambial cells.

The protein resides in the cell membrane. It carries out the reaction L-seryl-[protein] + ATP = O-phospho-L-seryl-[protein] + ADP + H(+). The catalysed reaction is L-threonyl-[protein] + ATP = O-phospho-L-threonyl-[protein] + ADP + H(+). In terms of biological role, acts with CLE41p and CLE44p peptides as a ligand-receptor pair in a signal transduction pathway involved in the regulation of procambium maintenance and polarity during vascular-tissue development. Mediates repression of tracheary element differentiation and the promotion of procambial cells formation and polar division adjacent to phloem cells in the veins. This is Leucine-rich repeat receptor-like protein kinase TDR from Arabidopsis thaliana (Mouse-ear cress).